Reading from the N-terminus, the 215-residue chain is Cytidylate kinase (215 aa).

An ATP-binding site is contributed by 11 to 19; the sequence is GPTASGKGT.

The protein belongs to the cytidylate kinase family. Type 1 subfamily.

The protein localises to the cytoplasm. It carries out the reaction CMP + ATP = CDP + ADP. The catalysed reaction is dCMP + ATP = dCDP + ADP. The protein is Cytidylate kinase of Polynucleobacter necessarius subsp. necessarius (strain STIR1).